The chain runs to 386 residues: uncharacterized protein (386 aa).

It belongs to the TelA family.

This is an uncharacterized protein from Bacillus subtilis (strain 168).